Consider the following 119-residue polypeptide: Large ribosomal subunit protein eL8 (119 aa).

Belongs to the eukaryotic ribosomal protein eL8 family. In terms of assembly, part of the 50S ribosomal subunit. Probably part of the RNase P complex.

Its subcellular location is the cytoplasm. Functionally, multifunctional RNA-binding protein that recognizes the K-turn motif in ribosomal RNA, the RNA component of RNase P, box H/ACA, box C/D and box C'/D' sRNAs. This is Large ribosomal subunit protein eL8 from Archaeoglobus fulgidus (strain ATCC 49558 / DSM 4304 / JCM 9628 / NBRC 100126 / VC-16).